The following is a 343-amino-acid chain: Interferon-inducible protein AIM2 (343 aa).

One can recognise a Pyrin domain in the interval 1-87 (MESKYKEILL…AKRLQEEKEK (87 aa)). In terms of domain architecture, HIN-200 spans 138-337 (MVAQQESIRE…SGVHSTIKVI (200 aa)).

It belongs to the HIN-200 family. As to quaternary structure, self-associates; forms homooligomers in response to cytosolic double-stranded DNA (dsDNA) and the dsDNA seems to serve as oligomerization platform. Component of AIM2 inflammasome, which consists of a signal sensor component (AIM2), an adapter (PYCARD/ASC), which recruits an effector pro-inflammatory caspase (CASP1). Interacts (via pyrin domain) with PYCARD/ASC (via pyrin domain); interaction is direct. Component of the AIM2 PANoptosome complex, a multiprotein complex that drives inflammatory cell death (PANoptosis). Interacts with PYDC5; disrupts assembly of the AIM2 inflammasome complex. Interacts with EIF2AK2/PKR. Interacts with MAPRE1. Interacts with IFI16. Interacts with isoform IFI16-beta of IFI16; preventing the interaction between AIM2 and PYCARD/ASC. Interacts with RACK1; promoting association with PP2A phosphatase and dephosphorylation of AKT1. Interacts with TRIM11; promoting AIM2 recruitment to autophagosomes and autophagy-dependent degradation. In terms of assembly, (Microbial infection) Interacts with human herpesvirus 8 protein SOX/ORF37; this interaction inhibits AIM2 polymerization and subsequent inflammasome activation. Post-translationally, degraded via selective autophagy following interaction with TRIM11. Expressed in spleen, small intestine, peripheral blood leukocytes, and testis.

It localises to the cytoplasm. The protein localises to the inflammasome. It is found in the nucleus. Its activity is regulated as follows. Inactive in absence of double-stranded DNA (dsDNA). Homooligomerizes upon binding to dsDNA, dsDNA serving as an oligomerization platform. AIM2 requires large dsDNA to generate a structural template that couples dsDNA ligand-binding and homooligomerization. Homooligomerization is followed by recruitment of PYCARD/ASC to initiate speck formation (nucleation). AIM2 and PYCARD/ASC homooligomer filaments assemble bidirectionally and the recognition between AIM2 and PYCARD/ASC oligomers occurs in a head-to-tail manner. Clustered PYCARD/ASC nucleates the formation of CASP1 filaments through the interaction of their respective CARD domains, acting as a platform for CASP1 polymerization and activation. Active CASP1 then specifically processes protein precursors, such as gasdermin-D (GSDMD), IL1B and IL18, leading to the release of mature cytokines in the extracellular milieu or pyroptosis, depending on cell type. AIM2 can be activated in response to events that cause genomic DNA (HIV protease inhibitor nelfinavir) or mitochondrial DNA release in the cytoplasm (such as Perfluoroalkyl substance pollutants or cholesterol overload). Activation of the AIM2 inflammasome is inhibited by isoform IFI16-beta of IFI16, which prevents the interaction between AIM2 and PYCARD/ASC. Activation of the AIM2 inflammasome is inhibited by TRIM11, which promotes autophagy-dependent degradation of AIM2. In terms of biological role, sensor component of the AIM2 inflammasome, which mediates inflammasome activation in response to the presence of double-stranded DNA (dsDNA) in the cytosol, leading to subsequent pyroptosis. Inflammasomes are supramolecular complexes that assemble in the cytosol in response to pathogens and other damage-associated signals and play critical roles in innate immunity and inflammation. Acts as a recognition receptor (PRR): specifically recognizes and binds dsDNA in the cytosol, and mediates the formation of the inflammasome polymeric complex composed of AIM2, CASP1 and PYCARD/ASC. Recruitment of pro-caspase-1 (proCASP1) to the AIM2 inflammasome promotes caspase-1 (CASP1) activation, which subsequently cleaves and activates inflammatory cytokines IL1B and IL18 and gasdermin-D (GSDMD), promoting cytokine secretion. In some cells, CASP1 activation mediates cleavage and activation of GSDMD, triggering pyroptosis without promoting cytokine secretion. Detects cytosolic dsDNA of viral and bacterial origin in a non-sequence-specific manner. Involved in the DNA damage response caused by acute ionizing radiation by mediating pyroptosis of intestinal epithelial cells and bone marrow cells in response to double-strand DNA breaks. Mechanistically, AIM2 senses DNA damage in the nucleus to mediate inflammasome assembly and inflammatory cell death. Also acts as a regulator of neurodevelopment via its role in the DNA damage response: acts by promoting neural cell death in response to DNA damage in the developing brain, thereby purging genetically compromised cells of the central nervous system. Pyroptosis mediated by the AIM2 inflammasome in response to DNA damage is dependent on GSDMD without involving IL1B and IL18 cytokine secretion. Also acts as a mediator of pyroptosis, necroptosis and apoptosis (PANoptosis), an integral part of host defense against pathogens, in response to bacterial infection. Can also trigger PYCARD/ASC-dependent, caspase-1-independent cell death that involves caspase-8 (CASP8). Its function is as follows. Also acts as a tumor suppressor independently of its role in inflammatory response. Able to suppress overt cell proliferation in enterocytes: restricts stem cell proliferation in the intestinal mucosa in an inflammasome-independent manner, contributing to a decrease in the likelihood of colorectal cancer development. AIM2 suppresses cell proliferation by inhibiting phosphorylation of AKT1 at 'Ser-473', preventing AKT1 activation and AKT-mTOR signaling pathway. Inhibits AKT1 phosphorylation both by inhibiting the activity of PRKDC/DNA-PK kinase and promoting dephosphorylation by PP2A phosphatase. Also acts as a key regulator of regulatory T-cells (Treg) homeostasis by promoting their stability: acts by preventing AKT1 activation. Its role in Treg homeostasis is important to restain autoimmune diseases. The chain is Interferon-inducible protein AIM2 from Homo sapiens (Human).